Here is a 338-residue protein sequence, read N- to C-terminus: 5-dehydro-2-deoxygluconokinase (338 aa).

It belongs to the carbohydrate kinase PfkB family.

It carries out the reaction 5-dehydro-2-deoxy-D-gluconate + ATP = 6-phospho-5-dehydro-2-deoxy-D-gluconate + ADP + H(+). The protein operates within polyol metabolism; myo-inositol degradation into acetyl-CoA; acetyl-CoA from myo-inositol: step 5/7. Functionally, catalyzes the phosphorylation of 5-dehydro-2-deoxy-D-gluconate (2-deoxy-5-keto-D-gluconate or DKG) to 6-phospho-5-dehydro-2-deoxy-D-gluconate (DKGP). In Mesomycoplasma hyopneumoniae (strain 7448) (Mycoplasma hyopneumoniae), this protein is 5-dehydro-2-deoxygluconokinase.